Consider the following 101-residue polypeptide: Small ribosomal subunit protein uS14 (101 aa).

It belongs to the universal ribosomal protein uS14 family. Part of the 30S ribosomal subunit. Contacts proteins S3 and S10.

Functionally, binds 16S rRNA, required for the assembly of 30S particles and may also be responsible for determining the conformation of the 16S rRNA at the A site. In Psychromonas ingrahamii (strain DSM 17664 / CCUG 51855 / 37), this protein is Small ribosomal subunit protein uS14.